A 226-amino-acid chain; its full sequence is Thioredoxin domain-containing protein 9 (226 aa).

The 106-residue stretch at 75 to 180 (EIGSERDFFQ…TTETLEWRLG (106 aa)) folds into the Thioredoxin domain. 3 positions are modified to phosphoserine: Ser-188, Ser-221, and Ser-223.

In terms of assembly, forms ternary complexes with the chaperonin TCP1 complex, spanning the cylindrical chaperonin cavity and contacting at least 2 subunits. Expressed in testis, liver, heart, kidney, brain, spleen and lung.

The protein resides in the cytoplasm. Its subcellular location is the nucleus. It is found in the cytoskeleton. The protein localises to the microtubule organizing center. It localises to the centrosome. The protein resides in the midbody. Significantly diminishes the chaperonin TCP1 complex ATPase activity, thus negatively impacts protein folding, including that of actin or tubulin. This Mus musculus (Mouse) protein is Thioredoxin domain-containing protein 9 (Txndc9).